A 404-amino-acid chain; its full sequence is Multidrug resistance protein MdtG (404 aa).

A run of 11 helical transmembrane segments spans residues 19–39 (LGCF…PLYV), 56–76 (LVFS…GGLA), 90–110 (LGMA…QFLI), 113–133 (ALLG…ATQV), 144–164 (TLST…GLLA), 171–191 (PVFF…FFFI), 222–242 (LFVT…ILTL), 254–274 (IAFI…LSAP), 288–308 (ILIV…FVQT), 317–337 (FLLG…LVYN), and 376–396 (AVFC…WNSL).

This sequence belongs to the major facilitator superfamily. DHA1 family. MdtG (TC 2.A.1.2.20) subfamily.

The protein resides in the cell inner membrane. This Salmonella typhi protein is Multidrug resistance protein MdtG.